The following is a 48-amino-acid chain: Piguamerin (48 aa).

Cystine bridges form between Cys3–Cys14, Cys8–Cys19, Cys21–Cys41, Cys26–Cys45, and Cys30–Cys47. The Antistasin-like domain maps to Cys19–Cys47.

It belongs to the protease inhibitor I15 (antistasin) family.

Its subcellular location is the secreted. Its function is as follows. Inhibits plasma and tissue kallikrein, and trypsin. May be involved in leech hematophagia. The protein is Piguamerin of Hirudo nipponia (Korean blood-sucking leech).